A 100-amino-acid chain; its full sequence is Urease subunit gamma (100 aa).

Belongs to the urease gamma subunit family. Heterotrimer of UreA (gamma), UreB (beta) and UreC (alpha) subunits. Three heterotrimers associate to form the active enzyme.

Its subcellular location is the cytoplasm. It catalyses the reaction urea + 2 H2O + H(+) = hydrogencarbonate + 2 NH4(+). It participates in nitrogen metabolism; urea degradation; CO(2) and NH(3) from urea (urease route): step 1/1. The protein is Urease subunit gamma of Kocuria rhizophila (strain ATCC 9341 / DSM 348 / NBRC 103217 / DC2201).